A 705-amino-acid chain; its full sequence is Translation initiation factor IF-2 (705 aa).

The interval 40–124 (DDQIKALDKK…QPAAPKEIPS (85 aa)) is disordered. Residues 41 to 58 (DQIKALDKKFKKEQKNDN) show a composition bias toward basic and acidic residues. The span at 59–77 (KQSTQNNHQKSNNQNQNKG) shows a compositional bias: low complexity. The span at 94–108 (KGNKKNNRNNKKNNK) shows a compositional bias: basic residues. One can recognise a tr-type G domain in the interval 207 to 376 (ERPAVVTIMG…GLVAEVQELK (170 aa)). Positions 216 to 223 (GHVDHGKT) are G1. 216 to 223 (GHVDHGKT) is a GTP binding site. The tract at residues 241-245 (GITQH) is G2. The segment at 262-265 (DTPG) is G3. GTP-binding positions include 262-266 (DTPGH) and 316-319 (NKID). A G4 region spans residues 316 to 319 (NKID). The interval 352–354 (SAL) is G5.

The protein belongs to the TRAFAC class translation factor GTPase superfamily. Classic translation factor GTPase family. IF-2 subfamily.

The protein localises to the cytoplasm. Functionally, one of the essential components for the initiation of protein synthesis. Protects formylmethionyl-tRNA from spontaneous hydrolysis and promotes its binding to the 30S ribosomal subunits. Also involved in the hydrolysis of GTP during the formation of the 70S ribosomal complex. The chain is Translation initiation factor IF-2 from Staphylococcus aureus (strain MSSA476).